The chain runs to 198 residues: Calcium channel flower (198 aa).

Transmembrane regions (helical) follow at residues 36 to 56 (LGIVAAFFAILFGLWNVLSII), 67 to 89 (IIQMIAGFIVMVLEAPCCFVCIE), and 114 to 134 (AVPPIFMCFGLASLFGSGLIF).

It belongs to the calcium channel flower family. Homomultimer. Associates with the dally/ magu complex.

It localises to the cell membrane. Its subcellular location is the cytoplasmic vesicle. It is found in the secretory vesicle. The protein resides in the synaptic vesicle membrane. The protein localises to the presynaptic cell membrane. It localises to the endosome. With respect to regulation, channel activity is inhibited by La(3+), which reduces Ca(2+) influx and thus inhibits it's function in promoting activity-dependent bulk endocytosis (ADBE) in response to high stimuli. In terms of biological role, transmembrane protein which mediates synaptic endocytosis, fitness-based cell culling, neuronal culling, morphogen gradient scaling, and calcium transport. Regulates synaptic endocytosis and hence couples exo- with endocytosis. Controls two major modes of synaptic vesicle (SV) endocytosis in the synaptic boutons of neuromuscular junctions (NMJs); Ca(2+) channel-independent Clathrin-mediated endocytosis (CME) in response to mild stimulation, and Ca(2+) channel-dependent activity-dependent bulk endocytosis (ADBE) in response to strong stimulation. Functions in ADBE and subsequent SV reformation from bulk endosomes by initiating Ca(2+) channel-dependent phosphatidylinositol 4,5-bisphosphate (PtdIns(4,5)P2) compartmentalization in synaptic boutons. There it acts at the periactive zone to provide the low Ca(2+) levels required to initiate Calcineurin activation and upregulate PtdIns(4,5)P2. Conversely PtdIns(4,5)P2 enhances fwe Ca(2+) channel-activity, establishing a positive feedback loop that induces PtdIns(4,5)P2 microdomain at the periactive zone. These microdomains trigger bulk membrane invagination (i.e. ADBE) by triggering actin polymerization while also promoting localization of fwe to bulk endosomes, thereby removing the ADBE trigger to reduce endocytosis and prevent excess membrane uptake. PtdIns(4,5)P2 then promotes SV reformation from the bulk endosomes, to coordinate ADBE and subsequent SV reformation. Different combinations of the flower isoforms at the cell membrane are also required for the identification and elimination of suboptimal or supernumerary cells during development, regeneration, and adulthood. Required for the recognition and elimination of unfit cells in the developing wing during cell competition. In the developing pupal retina, mediates the elimination of unwanted postmitotic neurons, including supernumerary photoreceptor neurons that form at the periphery of the retina and are contained within incomplete ommatidia units. Also required for efficient elimination and replacement of old neurons by newly generated neurons during regeneration in the adult brain following mechanical injury. Downstream of the flower fitness fingerprints, cells identified as unwanted or unfit are eliminated via apoptosis through the expression of ahuizotl (azot). However, the cells marked for elimination by the flower isoforms only undergo apoptosis if additional thresholds are met; (1) their neighboring fit/healthy cells express different levels of the fwe isoforms, and (2) the levels of the protective signal SPARC expressed by the loser or unwanted cells are unable to inhibit caspase activation. These additional thresholds for flower-mediated apoptosis, allows useful cells to recover from transient and limited stress before they are unnecessarily eliminated. Functions with dally and magu in a mechanism of scaling, which utilises apoptosis to ensure that the dpp morphogen gradient, which mediates organ growth, remains proportional to the size of the growing wing. In this mechanism, fwe represses dally- and Magu-dependent activity in expanding the gradient, and dally/Magu inhibits fwe-dependent apoptosis to keep cell death rate low. When the levels of these different proteins are optimally regulated the gradient correctly scales with organ growth but when this fails, fwe-mediated apoptosis is activated to trim the developing tissue to match the correct size of the gradient. The polypeptide is Calcium channel flower (Drosophila persimilis (Fruit fly)).